The chain runs to 289 residues: ATP synthase gamma chain (289 aa).

This sequence belongs to the ATPase gamma chain family. As to quaternary structure, F-type ATPases have 2 components, CF(1) - the catalytic core - and CF(0) - the membrane proton channel. CF(1) has five subunits: alpha(3), beta(3), gamma(1), delta(1), epsilon(1). CF(0) has three main subunits: a, b and c.

It localises to the cell inner membrane. In terms of biological role, produces ATP from ADP in the presence of a proton gradient across the membrane. The gamma chain is believed to be important in regulating ATPase activity and the flow of protons through the CF(0) complex. The chain is ATP synthase gamma chain from Haemophilus influenzae (strain ATCC 51907 / DSM 11121 / KW20 / Rd).